Consider the following 160-residue polypeptide: Transcription elongation factor GreA (160 aa).

A coiled-coil region spans residues 1–72 (MAEKTYPMTL…QISSLETKIR (72 aa)).

It belongs to the GreA/GreB family.

In terms of biological role, necessary for efficient RNA polymerase transcription elongation past template-encoded arresting sites. The arresting sites in DNA have the property of trapping a certain fraction of elongating RNA polymerases that pass through, resulting in locked ternary complexes. Cleavage of the nascent transcript by cleavage factors such as GreA or GreB allows the resumption of elongation from the new 3'terminus. GreA releases sequences of 2 to 3 nucleotides. The sequence is that of Transcription elongation factor GreA from Streptococcus pneumoniae (strain ATCC 700669 / Spain 23F-1).